The primary structure comprises 440 residues: Xaa-Pro dipeptidase (440 aa).

5 residues coordinate Mn(2+): Asp244, Asp255, His336, Glu381, and Glu420.

This sequence belongs to the peptidase M24B family. Mn(2+) is required as a cofactor. Post-translationally, the N-terminus is blocked.

It carries out the reaction Xaa-L-Pro dipeptide + H2O = an L-alpha-amino acid + L-proline. The catalysed reaction is diisopropyl fluorophosphate + H2O = diisopropyl phosphate + fluoride + 2 H(+). Its function is as follows. Splits dipeptides with a prolyl or hydroxyprolyl residue in the C-terminal position and a nonpolar amino acid at the N-terminal position. Also catalyzes the hydrolysis of toxic organophosphorus cholinesterase-inhibiting compounds including nerve gases such as diisopropylfluorophosphate (DFP), O-isopropyl methylphosphonofluoridate (sarin), O-pinacolyl methylphosphonofluoridate (soman), and O-cyclohexyl methylphosphonofluoridate. This chain is Xaa-Pro dipeptidase (pepQ), found in Pseudoalteromonas haloplanktis (Alteromonas haloplanktis).